The following is a 1256-amino-acid chain: Protein flightless-1 (1256 aa).

LRR repeat units lie at residues 4–28 (LPFV…MRQM), 29–51 (SRVQ…LGHL), 52–74 (QKLE…LTEL), 75–99 (SCLR…LFHL), 100–122 (EELT…LERA), 124–145 (NLIV…LFIH), 147–169 (TDLL…TRRL), 171–192 (NLKT…QLPS), 218–241 (LANL…VYNV), 243–264 (TLVR…VELW), 265–287 (QRLE…LCKL), 289–312 (KLRR…IGKL), 313–335 (GALE…LCRC), 336–358 (GALK…IHLL), and 360–381 (GLDQ…PSEA). A disordered region spans residues 405-476 (AAVPPSMPSS…ESLKPKRWDE (72 aa)). Over residues 431–476 (PRSEGDQDAAKVLKGMKDVAKDKDNEAGAVPEDGKPESLKPKRWDE) the composition is skewed to basic and acidic residues. 4 Gelsolin-like repeats span residues 512 to 589 (IEEV…EQFL), 633 to 703 (EPVA…AEFW), 749 to 822 (VELP…MQIF), and 1168 to 1242 (EKCA…SRRF).

Belongs to the villin/gelsolin family. Found in ovaries, larval fat bodies, brain and adult thorax.

Functionally, may play a key role in embryonic cellularization by interacting with both the cytoskeleton and other cellular components. Alternatively, it may play a structural role in indirect flight muscle. Vital for embryonic development. The protein is Protein flightless-1 (fliI) of Drosophila melanogaster (Fruit fly).